The sequence spans 306 residues: Methyl-CpG-binding domain-containing protein 7 (306 aa).

The segment covering 1–11 (MQTRSSSSPSA) has biased composition (polar residues). A disordered region spans residues 1-21 (MQTRSSSSPSANHRRETQLQI). MBD domains lie at 21–92 (IADP…QDKT), 106–171 (GVEY…RVLQ), and 172–242 (NRRG…ERLP). Asymmetric dimethylarginine occurs at positions 118, 145, and 174. Residues 163–306 (IEQQLRVLQN…AFVSLIEDRS (144 aa)) are required for interaction with PRMT11.

In terms of assembly, interacts with PRMT11. Interacts (via C-terminus) with IDM2, but not with IDM1. Interacts with IDM3. Part of a complex made of MBD7, IDM1, IDM2 and IDM3. Methylated by PRMT11. Expressed in leaves, buds, flowers, stems, siliques, mature seeds and roots.

The protein resides in the nucleus. It is found in the chromosome. Its function is as follows. Transcriptional regulator that binds CpG islands in promoters where the DNA is methylated at position 5 of cytosine within CpG dinucleotides. May directly affect chromatin structure by inducing intra- and inter- chromatin compaction via bridging over multiple methylated CpG sites. Acts as an anti-silencing factor that prevents DNA hypermethylation and gene repression. Requires high mCG density for binding. Recognizes preferentially mCGs located in transposable elements. Required for active DNA demethylation. Prefers to target genomic loci around chromocenters. This Arabidopsis thaliana (Mouse-ear cress) protein is Methyl-CpG-binding domain-containing protein 7.